Consider the following 220-residue polypeptide: Ribose-5-phosphate isomerase A (220 aa).

Substrate contacts are provided by residues 25-28 (TGST), 80-83 (DGAD), and 93-96 (KGGG). Catalysis depends on E102, which acts as the Proton acceptor. K120 lines the substrate pocket.

Belongs to the ribose 5-phosphate isomerase family. As to quaternary structure, homodimer.

It catalyses the reaction aldehydo-D-ribose 5-phosphate = D-ribulose 5-phosphate. It functions in the pathway carbohydrate degradation; pentose phosphate pathway; D-ribose 5-phosphate from D-ribulose 5-phosphate (non-oxidative stage): step 1/1. Catalyzes the reversible conversion of ribose-5-phosphate to ribulose 5-phosphate. The polypeptide is Ribose-5-phosphate isomerase A (Bacillus anthracis).